The primary structure comprises 270 residues: Glucosamine-6-phosphate deaminase (270 aa).

The Proton acceptor; for enolization step role is filled by D68. D145 functions as the For ring-opening step in the catalytic mechanism. The active-site Proton acceptor; for ring-opening step is H147. The active-site For ring-opening step is the E152.

Belongs to the glucosamine/galactosamine-6-phosphate isomerase family. NagB subfamily.

It catalyses the reaction alpha-D-glucosamine 6-phosphate + H2O = beta-D-fructose 6-phosphate + NH4(+). Its pathway is amino-sugar metabolism; N-acetylneuraminate degradation; D-fructose 6-phosphate from N-acetylneuraminate: step 5/5. Its function is as follows. Catalyzes the reversible isomerization-deamination of glucosamine 6-phosphate (GlcN6P) to form fructose 6-phosphate (Fru6P) and ammonium ion. In Bifidobacterium longum (strain DJO10A), this protein is Glucosamine-6-phosphate deaminase.